Here is a 131-residue protein sequence, read N- to C-terminus: Small ribosomal subunit protein uS11 (131 aa).

Belongs to the universal ribosomal protein uS11 family. As to quaternary structure, part of the 30S ribosomal subunit. Interacts with proteins S7 and S18. Binds to IF-3.

In terms of biological role, located on the platform of the 30S subunit, it bridges several disparate RNA helices of the 16S rRNA. Forms part of the Shine-Dalgarno cleft in the 70S ribosome. The chain is Small ribosomal subunit protein uS11 from Geobacter metallireducens (strain ATCC 53774 / DSM 7210 / GS-15).